The sequence spans 214 residues: Adenylate kinase (214 aa).

10–15 contacts ATP; sequence GAGKGT. The NMP stretch occupies residues 30-59; sequence STGDMLRAAVKAGTPLGLEAKKVMDAGQLV. Residues T31, R36, 57–59, 85–88, and Q92 contribute to the AMP site; these read QLV and GFPR. The interval 122–159 is LID; that stretch reads GRRVHPGSGRVYHVVFNPPKVEGKDDVTGEDLAIRPDD. ATP is bound by residues R123 and 132–133; that span reads VY. AMP contacts are provided by R156 and R167. Residue Q200 participates in ATP binding.

This sequence belongs to the adenylate kinase family. In terms of assembly, monomer.

It localises to the cytoplasm. The enzyme catalyses AMP + ATP = 2 ADP. The protein operates within purine metabolism; AMP biosynthesis via salvage pathway; AMP from ADP: step 1/1. In terms of biological role, catalyzes the reversible transfer of the terminal phosphate group between ATP and AMP. Plays an important role in cellular energy homeostasis and in adenine nucleotide metabolism. The chain is Adenylate kinase from Shewanella sp. (strain ANA-3).